The primary structure comprises 553 residues: Formate--tetrahydrofolate ligase (553 aa).

Position 62 to 69 (62 to 69 (TPAGEGKS)) interacts with ATP.

This sequence belongs to the formate--tetrahydrofolate ligase family.

The catalysed reaction is (6S)-5,6,7,8-tetrahydrofolate + formate + ATP = (6R)-10-formyltetrahydrofolate + ADP + phosphate. It participates in one-carbon metabolism; tetrahydrofolate interconversion. The protein is Formate--tetrahydrofolate ligase of Limosilactobacillus reuteri subsp. reuteri (strain JCM 1112) (Lactobacillus reuteri).